Reading from the N-terminus, the 444-residue chain is ATP-dependent protease ATPase subunit HslU (444 aa).

ATP-binding positions include I18 and 60–65 (GVGKTE). Positions 143 to 163 (WGEVENHDSHSSTRQAFRKKL) are disordered. ATP is bound by residues D257, E322, and R394.

The protein belongs to the ClpX chaperone family. HslU subfamily. As to quaternary structure, a double ring-shaped homohexamer of HslV is capped on each side by a ring-shaped HslU homohexamer. The assembly of the HslU/HslV complex is dependent on binding of ATP.

It is found in the cytoplasm. Its function is as follows. ATPase subunit of a proteasome-like degradation complex; this subunit has chaperone activity. The binding of ATP and its subsequent hydrolysis by HslU are essential for unfolding of protein substrates subsequently hydrolyzed by HslV. HslU recognizes the N-terminal part of its protein substrates and unfolds these before they are guided to HslV for hydrolysis. The sequence is that of ATP-dependent protease ATPase subunit HslU from Haemophilus influenzae (strain 86-028NP).